Consider the following 375-residue polypeptide: MDFDSISRESTFLSPLLNQNAMWQMNLGSDDTMGVDGSYPERHGEPDCAYYIRTGLCRFGSTCRFNHPHDRKLVIATARIKGEYPERIGQPECEFYLKTGTCKFGVTCKFHHPRNKAGIDGSVSVNVLSYPLRPNEDDCSYFLRIGQCKFGGTCKFNHPQTQSTNLMVSVRGSPVYSALQSLTGQPSYSWSRTSFVANPPRLQDPSGFASGSQGGLFSSGFHSGNSVPLGFYALPRENVFPERPGQPECQFYMKTGDCKFGTVCKFHHPRDRQTPPPDCVLSSVGLPLRPGEPLCVFYSRYGICKFGPSCKFDHPMRVFTYNNNTASPSPSSSLHQETAITTELRNLLVSSSVEAKPTSLPETTSAKDTIVDAQH.

C3H1-type zinc fingers lie at residues 42–70, 87–115, 133–161, 243–271, and 289–317; these read RHGE…HPHD, RIGQ…HPRN, RPNE…HPQT, RPGQ…HPRD, and RPGE…HPMR. The disordered stretch occupies residues 352 to 375; the sequence is SVEAKPTSLPETTSAKDTIVDAQH.

It localises to the nucleus. This Arabidopsis thaliana (Mouse-ear cress) protein is Zinc finger CCCH domain-containing protein 57 (ZFN3).